The primary structure comprises 48 residues: Delta-ctenitoxin-Pn1b (48 aa).

Cystine bridges form between Cys-1-Cys-15, Cys-8-Cys-21, Cys-12-Cys-48, Cys-14-Cys-31, and Cys-23-Cys-29.

Belongs to the neurotoxin 03 (Tx2) family. 05 subfamily. Expressed by the venom gland.

It localises to the secreted. Insecticidal neurotoxin that reversibly inhibits the N-methyl-D-aspartate (NMDA)-subtype of ionotropic glutamate receptor (GRIN) and inhibits inactivation of insect sodium channels (Nav). Inhibits glutamate uptake in rat brain synaptosomes. In vivo, induces immediate excitatory effects when injected intrathoracically in houseflies and cockroaches. The polypeptide is Delta-ctenitoxin-Pn1b (Phoneutria nigriventer (Brazilian armed spider)).